The sequence spans 364 residues: Coproporphyrin III ferrochelatase (364 aa).

Fe-coproporphyrin III is bound by residues Arg29 and Tyr118. Residues His169 and Glu250 each coordinate Fe(2+).

Belongs to the ferrochelatase family.

It is found in the cytoplasm. The enzyme catalyses Fe-coproporphyrin III + 2 H(+) = coproporphyrin III + Fe(2+). The protein operates within porphyrin-containing compound metabolism; protoheme biosynthesis. Its function is as follows. Involved in coproporphyrin-dependent heme b biosynthesis. Catalyzes the insertion of ferrous iron into coproporphyrin III to form Fe-coproporphyrin III. The protein is Coproporphyrin III ferrochelatase of Streptococcus pneumoniae serotype 2 (strain D39 / NCTC 7466).